Consider the following 492-residue polypeptide: N-succinylglutamate 5-semialdehyde dehydrogenase (492 aa).

225–230 serves as a coordination point for NAD(+); that stretch reads GSSNTG. Catalysis depends on residues Glu-248 and Cys-282.

This sequence belongs to the aldehyde dehydrogenase family. AstD subfamily.

The catalysed reaction is N-succinyl-L-glutamate 5-semialdehyde + NAD(+) + H2O = N-succinyl-L-glutamate + NADH + 2 H(+). Its pathway is amino-acid degradation; L-arginine degradation via AST pathway; L-glutamate and succinate from L-arginine: step 4/5. Functionally, catalyzes the NAD-dependent reduction of succinylglutamate semialdehyde into succinylglutamate. The sequence is that of N-succinylglutamate 5-semialdehyde dehydrogenase from Colwellia psychrerythraea (strain 34H / ATCC BAA-681) (Vibrio psychroerythus).